We begin with the raw amino-acid sequence, 346 residues long: Phosphoribosylformylglycinamidine cyclo-ligase (346 aa).

This sequence belongs to the AIR synthase family.

The protein localises to the cytoplasm. The enzyme catalyses 2-formamido-N(1)-(5-O-phospho-beta-D-ribosyl)acetamidine + ATP = 5-amino-1-(5-phospho-beta-D-ribosyl)imidazole + ADP + phosphate + H(+). The protein operates within purine metabolism; IMP biosynthesis via de novo pathway; 5-amino-1-(5-phospho-D-ribosyl)imidazole from N(2)-formyl-N(1)-(5-phospho-D-ribosyl)glycinamide: step 2/2. In Shewanella piezotolerans (strain WP3 / JCM 13877), this protein is Phosphoribosylformylglycinamidine cyclo-ligase.